The following is a 140-amino-acid chain: Translation initiation factor 2 subunit beta (140 aa).

Belongs to the eIF-2-beta/eIF-5 family. As to quaternary structure, heterotrimer composed of an alpha, a beta and a gamma chain.

In terms of biological role, eIF-2 functions in the early steps of protein synthesis by forming a ternary complex with GTP and initiator tRNA. This is Translation initiation factor 2 subunit beta from Pyrococcus furiosus (strain ATCC 43587 / DSM 3638 / JCM 8422 / Vc1).